Reading from the N-terminus, the 151-residue chain is Ribonuclease H (151 aa).

The RNase H type-1 domain occupies 1–146 (MPDLYAYTDG…ADELARAGMA (146 aa)). Mg(2+) is bound by residues Asp9, Glu52, Asp74, and Asp138.

Belongs to the RNase H family. In terms of assembly, monomer. The cofactor is Mg(2+).

The protein resides in the cytoplasm. It carries out the reaction Endonucleolytic cleavage to 5'-phosphomonoester.. Endonuclease that specifically degrades the RNA of RNA-DNA hybrids. This Cereibacter sphaeroides (strain ATCC 17029 / ATH 2.4.9) (Rhodobacter sphaeroides) protein is Ribonuclease H.